A 273-amino-acid chain; its full sequence is Undecaprenyl-diphosphatase (273 aa).

The next 7 helical transmembrane spans lie at 54 to 74 (LGSILAVVVMFWRQLFGLIGI), 90 to 110 (LTLIHILLGMIPAVVLGLVFH), 116 to 136 (LFNPINVMYALVVGGLLLIAA), 156 to 178 (QAFMIGCFQCLALWPGFSRSGAT), 190 to 210 (YAASEFSFLLAVPMMMGATVL), 222 to 242 (ADIPMFAVGFVTAFVVALIAI), and 252 to 272 (ISFIPFAIYRFVVAAAVYVVF).

Belongs to the UppP family.

The protein localises to the cell inner membrane. It catalyses the reaction di-trans,octa-cis-undecaprenyl diphosphate + H2O = di-trans,octa-cis-undecaprenyl phosphate + phosphate + H(+). In terms of biological role, catalyzes the dephosphorylation of undecaprenyl diphosphate (UPP). Confers resistance to bacitracin. This is Undecaprenyl-diphosphatase from Salmonella paratyphi A (strain ATCC 9150 / SARB42).